We begin with the raw amino-acid sequence, 363 residues long: Histidinol-phosphate aminotransferase (363 aa).

Lysine 215 is subject to N6-(pyridoxal phosphate)lysine.

The protein belongs to the class-II pyridoxal-phosphate-dependent aminotransferase family. Histidinol-phosphate aminotransferase subfamily. As to quaternary structure, homodimer. Pyridoxal 5'-phosphate is required as a cofactor.

The enzyme catalyses L-histidinol phosphate + 2-oxoglutarate = 3-(imidazol-4-yl)-2-oxopropyl phosphate + L-glutamate. The protein operates within amino-acid biosynthesis; L-histidine biosynthesis; L-histidine from 5-phospho-alpha-D-ribose 1-diphosphate: step 7/9. The chain is Histidinol-phosphate aminotransferase from Buchnera aphidicola subsp. Diuraphis noxia.